The chain runs to 383 residues: Hippurate hydrolase (383 aa).

The protein belongs to the peptidase M20 family.

The enzyme catalyses N-benzoylglycine + H2O = benzoate + glycine. In terms of biological role, cleaves hippuric acid into benzoic acid and glycine. In Campylobacter jejuni subsp. jejuni serotype O:2 (strain ATCC 700819 / NCTC 11168), this protein is Hippurate hydrolase.